A 217-amino-acid chain; its full sequence is Ribosomal RNA small subunit methyltransferase G (217 aa).

Residues Gly-79, Leu-84, 130–131 (IE), and Arg-145 contribute to the S-adenosyl-L-methionine site.

The protein belongs to the methyltransferase superfamily. RNA methyltransferase RsmG family.

The protein localises to the cytoplasm. It catalyses the reaction guanosine(527) in 16S rRNA + S-adenosyl-L-methionine = N(7)-methylguanosine(527) in 16S rRNA + S-adenosyl-L-homocysteine. Functionally, specifically methylates the N7 position of guanine in position 527 of 16S rRNA. This chain is Ribosomal RNA small subunit methyltransferase G, found in Hahella chejuensis (strain KCTC 2396).